The chain runs to 470 residues: Hydroxymethylglutaryl-CoA synthase (470 aa).

Glutamate 100 functions as the Proton donor/acceptor in the catalytic mechanism. Cysteine 134 (acyl-thioester intermediate) is an active-site residue. (3S)-3-hydroxy-3-methylglutaryl-CoA is bound by residues cysteine 134, threonine 176, serine 225, histidine 269, lysine 278, asparagine 348, and serine 382. The active-site Proton donor/acceptor is histidine 269.

This sequence belongs to the thiolase-like superfamily. HMG-CoA synthase family.

It catalyses the reaction acetoacetyl-CoA + acetyl-CoA + H2O = (3S)-3-hydroxy-3-methylglutaryl-CoA + CoA + H(+). It functions in the pathway metabolic intermediate biosynthesis; (R)-mevalonate biosynthesis; (R)-mevalonate from acetyl-CoA: step 2/3. In terms of biological role, hydroxymethylglutaryl-CoA synthase; part of the first module of ergosterol biosynthesis pathway that includes the early steps of the pathway, conserved across all eukaryotes, and which results in the formation of mevalonate from acetyl-coenzyme A (acetyl-CoA). This module also plays a key role in the biosynthesis of triterpenes such as ganoderic acids (GA), a group of highly oxygenated lanostane-type triterpenoids which are well recognized as a main group of unique bioactive compounds in the medicinal mushroom Ganoderma lucidum. In this module, the acetyl-CoA acetyltransferase catalyzes the formation of acetoacetyl-CoA. The hydroxymethylglutaryl-CoA synthase HMGS then condenses acetyl-CoA with acetoacetyl-CoA to form HMG-CoA. The rate-limiting step of the early module is the reduction to mevalonate by the 3-hydroxy-3-methylglutaryl-coenzyme A (HMG-CoA) reductase. In Ganoderma lucidum (Ling zhi medicinal fungus), this protein is Hydroxymethylglutaryl-CoA synthase.